We begin with the raw amino-acid sequence, 82 residues long: MSTYDEIEIEDMTFEPENQMFTYPCPCGDRFQIYLDDMFEGEKVAVCPSCSLMIDVVFDKEDLAEYYEEAGIHPPEPIAAAA.

Positions 3–59 constitute a DPH-type MB domain; it reads TYDEIEIEDMTFEPENQMFTYPCPCGDRFQIYLDDMFEGEKVAVCPSCSLMIDVVFD. 4 residues coordinate Fe cation: Cys-25, Cys-27, Cys-47, and Cys-50. The required for interaction with the elongator complex stretch occupies residues 66 to 82; that stretch reads YYEEAGIHPPEPIAAAA.

The protein belongs to the DPH3 family. Component of the 2-(3-amino-3-carboxypropyl)histidine synthase complex composed of DPH1, DPH2, KTI11/DPH3 and a NADH-dependent reductase, predominantly CBR1. Interacts with DPH1. Interacts with DPH2. Interacts with CBR1. Interacts with elongation factor 2. Interacts with ATS1/KTI13; the interaction is direct. Interacts with the 40S ribosomal protein RPS7A. Interacts with the 40S ribosomal protein RPS19A. Interacts with the elongator complex subunit IKI3/ELP1. Interacts with the elongator complex subunit ELP2. Interacts with the elongator complex subunit ELP3. Interacts with the elongator complex subunit ELP5.

It localises to the cytoplasm. The protein localises to the nucleus. It catalyses the reaction [3Fe-4S](1+)-[protein] + Fe(2+)-[Dph3] = [3Fe-4S](0)-[protein] + Fe(3+)-[Dph3]. The enzyme catalyses 2 [3Fe-4S](0)-[protein] + 2 Fe(2+)-[Dph3] + NADH = 2 [4Fe-4S](1+)-[protein] + 2 [Dph3] + NAD(+) + H(+). It functions in the pathway protein modification; peptidyl-diphthamide biosynthesis. Required for the first step of diphthamide biosynthesis, a post-translational modification of histidine which occurs in elongation factor 2. DPH1 and DPH2 transfer a 3-amino-3-carboxypropyl (ACP) group from S-adenosyl-L-methionine (SAM) to a histidine residue, the reaction is assisted by a reduction system comprising KTI11/DPH3 and a NADH-dependent reductase, predominantly CBR1. Acts as an electron donor to reduce the Fe-S cluster in DPH1-DPH2 keeping the [4Fe-4S] clusters in the active and reduced state. Restores iron to DPH1-DPH2 iron-sulfur clusters which have degraded from [4Fe-4S] to [3Fe-4S] by donating an iron atom to reform [4Fe-4S] clusters, in a manner dependent on the presence of elongation factor 2 and SAM. Together with ATS1; associates with the elongator complex and is required for tRNA Wobble base modifications mediated by the elongator complex. The elongator complex is required for multiple tRNA modifications, including mcm5U (5-methoxycarbonylmethyl uridine), mcm5s 2U (5-methoxycarbonylmethyl-2-thiouridine), and ncm5U (5-carbamoylmethyl uridine). This is Diphthamide biosynthesis protein 3 from Saccharomyces cerevisiae (strain ATCC 204508 / S288c) (Baker's yeast).